Reading from the N-terminus, the 220-residue chain is StAR-related lipid transfer protein 6 (220 aa).

The 208-residue stretch at 1–208 folds into the START domain; that stretch reads MDFKAIAQQT…AKDGIKAHRT (208 aa).

Its function is as follows. May be involved in the intracellular transport of sterols or other lipids. May bind cholesterol or other sterols. The sequence is that of StAR-related lipid transfer protein 6 (STARD6) from Homo sapiens (Human).